Reading from the N-terminus, the 179-residue chain is Large ribosomal subunit protein uL5 (179 aa).

This sequence belongs to the universal ribosomal protein uL5 family. Part of the 50S ribosomal subunit; part of the 5S rRNA/L5/L18/L25 subcomplex. Contacts the 5S rRNA and the P site tRNA. Forms a bridge to the 30S subunit in the 70S ribosome.

Functionally, this is one of the proteins that bind and probably mediate the attachment of the 5S RNA into the large ribosomal subunit, where it forms part of the central protuberance. In the 70S ribosome it contacts protein S13 of the 30S subunit (bridge B1b), connecting the 2 subunits; this bridge is implicated in subunit movement. Contacts the P site tRNA; the 5S rRNA and some of its associated proteins might help stabilize positioning of ribosome-bound tRNAs. The protein is Large ribosomal subunit protein uL5 of Clostridium novyi (strain NT).